The sequence spans 170 residues: Cathelicidin antimicrobial peptide (170 aa).

A signal peptide spans 1–30 (MDTQRDSPSLGRWSLVLLLLGLVMPLAIVA). Residues 31–131 (QVLSYQEAVL…DISCDKDNRR (101 aa)) constitute a propeptide, cathelin-like domain (CLD). Cystine bridges form between C86/C97 and C108/C125. Residues 150–162 (FKRIVQRIKDFLQ) are active core.

It belongs to the cathelicidin family. As to quaternary structure, monomer, homodimer or homotrimer (in vitro). Oligomerizes as tetra- or hexamer in solution (in vitro). Proteolytically cleaved by proteinase PRTN3 into antibacterial peptide LL-37. Proteolytically cleaved by cathepsin CTSG and neutrophil elastase ELANE. In terms of processing, resistant to proteolytic degradation in solution, and when bound to both zwitterionic (mimicking mammalian membranes) and negatively charged membranes (mimicking bacterial membranes). Post-translationally, after secretion onto the skin surface, the CAMP gene product is processed by a serine protease-dependent mechanism into multiple novel antimicrobial peptides distinct from and shorter than cathelicidin LL-37. These peptides show enhanced antimicrobial action, acquiring the ability to kill skin pathogens such as S.aureus, E.coli and C.albicans. These peptides have lost the ability to stimulate CXCL8/IL8 release from keratinocytes. The peptides act synergistically, killing bacteria at lower concentrations when present together, and maintain activity at increased salt condition.

It localises to the secreted. The protein localises to the vesicle. In terms of biological role, antimicrobial protein that is an integral component of the innate immune system. Binds to bacterial lipopolysaccharides (LPS). Acts via neutrophil N-formyl peptide receptors to enhance the release of CXCL2. Postsecretory processing generates multiple cathelicidin antimicrobial peptides with various lengths which act as a topical antimicrobial defense in sweat on skin. The unprocessed precursor form, cathelicidin antimicrobial peptide, inhibits the growth of Gram-negative E.coli and E.aerogenes with efficiencies comparable to that of the mature peptide LL-37 (in vitro). Its function is as follows. Antimicrobial peptide that is an integral component of the innate immune system. Binds to bacterial lipopolysaccharides (LPS). Causes membrane permeabilization by forming transmembrane pores (in vitro). Causes lysis of E.coli. Exhibits antimicrobial activity against Gram-negative bacteria such as P.aeruginosa, S.typhimurium, E.aerogenes, E.coli and P.syringae, Gram-positive bacteria such as L.monocytogenes, S.epidermidis, S.pyogenes and S.aureus, as well as vancomycin-resistant enterococci (in vitro). Exhibits antimicrobial activity against methicillin-resistant S.aureus, P.mirabilis, and C.albicans in low-salt media, but not in media containing 100 mM NaCl (in vitro). Forms chiral supramolecular assemblies with quinolone signal (PQS) molecules of P.aeruginosa, which may lead to interference of bacterial quorum signaling and perturbance of bacterial biofilm formation. May form supramolecular fiber-like assemblies on bacterial membranes. Induces cytokine and chemokine producation as well as TNF/TNFA and CSF2/GMCSF production in normal human keratinocytes. Exhibits hemolytic activity against red blood cells. Functionally, exhibits antimicrobial activity against E.coli and B.megaterium (in vitro). The chain is Cathelicidin antimicrobial peptide from Nomascus leucogenys (Northern white-cheeked gibbon).